A 279-amino-acid polypeptide reads, in one-letter code: MKKLLISAVSALVLGSGAAFANSNVPDHAFSFEGIFGKYDQAQLRRGFQVYNEVCSACHGMKFVPIRTLADDGGPQLDPTFVREYAAGLDTIIDKDSGEERDRKETDMFPTRVGDGMGPDLSVMAKARAGFSGPAGSGMNQLFKGMGGPEYIYNYVIGFEENPECAPEGIDGYYYNKTFQIGGVPDTCKDAAGVKITHGSWARMPPPLVDDQVTYEDGTPATVDQMAQDVSAFLMWAAEPKLVARKQMGLVAMVMLGLLSVMLYLTNKRLWAPYKGHKA.

The signal sequence occupies residues 1-21; the sequence is MKKLLISAVSALVLGSGAAFA. Residues C55, C58, H59, and M204 each coordinate heme c. A helical transmembrane segment spans residues 248–266; it reads MGLVAMVMLGLLSVMLYLT.

In terms of assembly, the main subunits of complex b-c1 are: cytochrome b, cytochrome c1 and the Rieske protein. In terms of processing, binds 1 heme c group covalently per subunit.

It localises to the cell membrane. Functionally, component of the ubiquinol-cytochrome c reductase complex (complex III or cytochrome b-c1 complex), which is a respiratory chain that generates an electrochemical potential coupled to ATP synthesis. c1 functions as an electron donor to cytochrome c. The polypeptide is Cytochrome c1 (petC) (Rhodobacter capsulatus (strain ATCC BAA-309 / NBRC 16581 / SB1003)).